Here is a 396-residue protein sequence, read N- to C-terminus: Elongation factor Tu (396 aa).

The tr-type G domain occupies 10 to 205; sequence KPHVNIGTIG…ACDDSIPDPE (196 aa). A G1 region spans residues 19-26; that stretch reads GHVDHGKT. Position 19–26 (19–26) interacts with GTP; the sequence is GHVDHGKT. Thr26 serves as a coordination point for Mg(2+). A G2 region spans residues 62–66; the sequence is GITIN. A G3 region spans residues 83-86; that stretch reads DAPG. GTP contacts are provided by residues 83–87 and 138–141; these read DAPGH and NKCD. The interval 138–141 is G4; the sequence is NKCD. The segment at 175 to 177 is G5; sequence SAL.

This sequence belongs to the TRAFAC class translation factor GTPase superfamily. Classic translation factor GTPase family. EF-Tu/EF-1A subfamily. As to quaternary structure, monomer.

It is found in the cytoplasm. It carries out the reaction GTP + H2O = GDP + phosphate + H(+). Functionally, GTP hydrolase that promotes the GTP-dependent binding of aminoacyl-tRNA to the A-site of ribosomes during protein biosynthesis. The chain is Elongation factor Tu from Corynebacterium diphtheriae (strain ATCC 700971 / NCTC 13129 / Biotype gravis).